The primary structure comprises 280 residues: Undecaprenyl-diphosphatase (280 aa).

The next 8 membrane-spanning stretches (helical) occupy residues Met1–Val21, Phe41–Tyr61, Phe87–Phe107, Leu115–Val135, Ile147–Gly167, Lys186–Leu206, Val226–Ile246, and Tyr260–Val280.

It belongs to the UppP family.

The protein resides in the cell inner membrane. The enzyme catalyses di-trans,octa-cis-undecaprenyl diphosphate + H2O = di-trans,octa-cis-undecaprenyl phosphate + phosphate + H(+). Functionally, catalyzes the dephosphorylation of undecaprenyl diphosphate (UPP). Confers resistance to bacitracin. The sequence is that of Undecaprenyl-diphosphatase from Porphyromonas gingivalis (strain ATCC BAA-308 / W83).